A 155-amino-acid polypeptide reads, in one-letter code: Large ribosomal subunit protein uL13 (155 aa).

It belongs to the universal ribosomal protein uL13 family. As to quaternary structure, part of the 50S ribosomal subunit.

Its function is as follows. This protein is one of the early assembly proteins of the 50S ribosomal subunit, although it is not seen to bind rRNA by itself. It is important during the early stages of 50S assembly. The protein is Large ribosomal subunit protein uL13 of Rickettsia conorii (strain ATCC VR-613 / Malish 7).